The primary structure comprises 133 residues: ATP synthase epsilon chain, chloroplastic (133 aa).

It belongs to the ATPase epsilon chain family. As to quaternary structure, F-type ATPases have 2 components, CF(1) - the catalytic core - and CF(0) - the membrane proton channel. CF(1) has five subunits: alpha(3), beta(3), gamma(1), delta(1), epsilon(1). CF(0) has three main subunits: a, b and c.

The protein resides in the plastid. Its subcellular location is the chloroplast thylakoid membrane. Produces ATP from ADP in the presence of a proton gradient across the membrane. This is ATP synthase epsilon chain, chloroplastic from Morus indica (Mulberry).